Consider the following 133-residue polypeptide: MKLKKTCIAITVAVGVISLSGCSTASALSGLLSDSPDVTAQVGAENTKQLAGVTAKADDKREVKVSDSNIGKIDSSVKKSVEVSTIQANTVNAESITVTKSGSWYDPVVCWILVFIVLLLFYFLIRKHEKKEA.

A signal peptide spans 1 to 21 (MKLKKTCIAITVAVGVISLSG). A lipid anchor (N-palmitoyl cysteine; by host) is attached at Cys22. A lipid anchor (S-diacylglycerol cysteine; by host) is attached at Cys22. The Periplasmic segment spans residues 22–104 (CSTASALSGL…SITVTKSGSW (83 aa)). A helical transmembrane segment spans residues 105-125 (YDPVVCWILVFIVLLLFYFLI). Residues 126–133 (RKHEKKEA) lie on the Cytoplasmic side of the membrane.

The protein localises to the host cell inner membrane. Its subcellular location is the host cell outer membrane. Disrupts the host outer membrane and participates in cell lysis during virus exit. The spanin complex conducts the final step in host lysis by disrupting the outer membrane after holin and endolysin action have permeabilized the inner membrane and degraded the host peptidoglycans. Host outer membrane disruption is possibly due to local fusion between the inner and outer membrane performed by the spanin. Functionally, seems to have a dominant negative lysis delay effect on gp11 function. May serve as an intrinsic anti-spanin, providing another level of regulation for u-spanin function. The sequence is that of U-spanin from Escherichia phage T1 (Bacteriophage T1).